The primary structure comprises 244 residues: HTH-type transcriptional regulator Cmr (244 aa).

41–160 (GSAPLHRDDV…RRWLSSVAQR (120 aa)) contributes to the a nucleoside 3',5'-cyclic phosphate binding site. The HTH crp-type domain occupies 174 to 237 (RPLPAQVAQL…YAVIEITDQH (64 aa)). The H-T-H motif DNA-binding region spans 197-216 (QRTLAAMLGAQRPSINKILK).

In terms of biological role, positively regulates the expression of at least groEL2. The polypeptide is HTH-type transcriptional regulator Cmr (cmr) (Mycobacterium tuberculosis (strain CDC 1551 / Oshkosh)).